A 184-amino-acid polypeptide reads, in one-letter code: RNA polymerase sigma factor HrpL (184 aa).

A Polymerase core binding motif is present at residues 49 to 62 (DILQCVFLEALRNE). The H-T-H motif DNA-binding region spans 151–170 (YQETANTLGVPIGTVRSRLS).

This sequence belongs to the sigma-70 factor family. ECF subfamily.

In terms of biological role, sigma factors are initiation factors that promote the attachment of RNA polymerase to specific initiation sites and are then released. This sigma factor is involved in the activation of hprD as well as other hrp loci which are involved in plant pathogenicity, hrmA and avr genes. This is RNA polymerase sigma factor HrpL (hrpL) from Pseudomonas syringae pv. syringae.